Reading from the N-terminus, the 170-residue chain is Lipoprotein signal peptidase (170 aa).

The next 3 membrane-spanning stretches (helical) occupy residues 9-29, 72-92, and 93-113; these read IGSV…KYLV, LFFL…ILKE, and TNKI…GNII. Active-site residues include Asp-124 and Asp-146. Residues 142–162 form a helical membrane-spanning segment; it reads FNFADSYVVIGITLFIIYDLF.

It belongs to the peptidase A8 family.

The protein resides in the cell inner membrane. The enzyme catalyses Release of signal peptides from bacterial membrane prolipoproteins. Hydrolyzes -Xaa-Yaa-Zaa-|-(S,diacylglyceryl)Cys-, in which Xaa is hydrophobic (preferably Leu), and Yaa (Ala or Ser) and Zaa (Gly or Ala) have small, neutral side chains.. It functions in the pathway protein modification; lipoprotein biosynthesis (signal peptide cleavage). Its function is as follows. This protein specifically catalyzes the removal of signal peptides from prolipoproteins. This chain is Lipoprotein signal peptidase, found in Borrelia hermsii (strain HS1 / DAH).